The sequence spans 591 residues: MEASPGDEFEHSPQERDGPEIKEEEQLAPTLQVGNTSLKPDGIQCWDDLWDRREGLGKRQPRDPVPRILGEPRWGQGSNDRAAVCGECGKSFRQMSDLVKHQRTHTGEKPYKCGVCGKGFGDSSARIKHQRTHTGEKAYRVRPPAPGPPKMPRSRIPAGERPTICGECGKSFRQSSDLVKHQRTHTGEKPYKCGICGKGFGDSSARIKHQRTHRGDQLPRPVVPRRQPSPAAPAAPHRPKAQDKPYICTDCGKRFVLSCSLLSHQRSHLGPKPFGCDVCGKEFARGSDLVKHLRVHTGEKPYLCPECGKGFADSSARVKHLRTHSGQRPHACPECNRSFSLSSTLLRHRLTHVEPQDFSLAAYPVVPLIPSPPPPPLGTSPSLTPRSPSHSSDGPFGLPGLEPEPGGPQAGEPPPPLAGDKPHKCPECGKGFRRSSDLVKHHRVHTGEKPYLCPECGKGFADSSARVKHLRTHQGERTRPPPPPSTLLRPHNPPGSVPIVPQSRVQGRPSGPSQLHVCGFCGKEFPRSSDLVKHRRTHTGEKPYKCAECGKGFGDSSARIKHQRGHLALKPFGVGDGPPRPLKEESPAGLE.

Residue M1 is modified to N-acetylmethionine. Disordered regions lie at residues 1–24 (MEAS…IKEE) and 55–80 (GLGK…GSND). 2 stretches are compositionally biased toward basic and acidic residues: residues 8–24 (EFEH…IKEE) and 55–65 (GLGKRQPRDPV). S12 bears the Phosphoserine mark. Residue K58 forms a Glycyl lysine isopeptide (Lys-Gly) (interchain with G-Cter in SUMO2) linkage. C2H2-type zinc fingers lie at residues 83 to 105 (AVCG…QRTH) and 111 to 133 (YKCG…QRTH). The segment at 131–160 (RTHTGEKAYRVRPPAPGPPKMPRSRIPAGE) is disordered. K150 is covalently cross-linked (Glycyl lysine isopeptide (Lys-Gly) (interchain with G-Cter in SUMO2)). 2 C2H2-type zinc fingers span residues 163-185 (TICG…QRTH) and 191-213 (YKCG…QRTH). Positions 206 to 241 (RIKHQRTHRGDQLPRPVVPRRQPSPAAPAAPHRPKA) are disordered. Low complexity predominate over residues 224–235 (PRRQPSPAAPAA). A Glycyl lysine isopeptide (Lys-Gly) (interchain with G-Cter in SUMO2) cross-link involves residue K240. 2 consecutive C2H2-type zinc fingers follow at residues 246–268 (YICT…QRSH) and 274–296 (FGCD…LRVH). K300 is covalently cross-linked (Glycyl lysine isopeptide (Lys-Gly) (interchain with G-Cter in SUMO2)). C2H2-type zinc fingers lie at residues 302-324 (YLCP…LRTH) and 330-352 (HACP…RLTH). The interval 372–429 (PPPPPLGTSPSLTPRSPSHSSDGPFGLPGLEPEPGGPQAGEPPPPLAGDKPHKCPECG) is disordered. Positions 379–404 (TSPSLTPRSPSHSSDGPFGLPGLEPE) are enriched in low complexity. Residues 423 to 445 (HKCPECGKGFRRSSDLVKHHRVH) form a C2H2-type 9 zinc finger. Residue K449 forms a Glycyl lysine isopeptide (Lys-Gly) (interchain with G-Cter in SUMO2) linkage. A C2H2-type 10 zinc finger spans residues 451-473 (YLCPECGKGFADSSARVKHLRTH). The tract at residues 464 to 512 (SARVKHLRTHQGERTRPPPPPSTLLRPHNPPGSVPIVPQSRVQGRPSGP) is disordered. Pro residues predominate over residues 480-496 (PPPPPSTLLRPHNPPGS). C2H2-type zinc fingers lie at residues 516 to 538 (HVCG…RRTH) and 544 to 566 (YKCA…QRGH). A disordered region spans residues 564–591 (RGHLALKPFGVGDGPPRPLKEESPAGLE). The span at 581-591 (PLKEESPAGLE) shows a compositional bias: basic and acidic residues. A Glycyl lysine isopeptide (Lys-Gly) (interchain with G-Cter in SUMO2) cross-link involves residue K583.

Belongs to the krueppel C2H2-type zinc-finger protein family.

It localises to the nucleus. Its function is as follows. May be involved in transcriptional regulation. This is Zinc finger protein 48 (Znf48) from Mus musculus (Mouse).